The chain runs to 256 residues: Triosephosphate isomerase (256 aa).

A substrate-binding site is contributed by 9–11 (NWK). His95 serves as the catalytic Electrophile. Glu167 serves as the catalytic Proton acceptor. Residues Gly173, Ser212, and 233–234 (GG) each bind substrate.

This sequence belongs to the triosephosphate isomerase family. As to quaternary structure, homodimer.

The protein localises to the cytoplasm. The enzyme catalyses D-glyceraldehyde 3-phosphate = dihydroxyacetone phosphate. It functions in the pathway carbohydrate biosynthesis; gluconeogenesis. The protein operates within carbohydrate degradation; glycolysis; D-glyceraldehyde 3-phosphate from glycerone phosphate: step 1/1. Its function is as follows. Involved in the gluconeogenesis. Catalyzes stereospecifically the conversion of dihydroxyacetone phosphate (DHAP) to D-glyceraldehyde-3-phosphate (G3P). This chain is Triosephosphate isomerase, found in Proteus mirabilis (strain HI4320).